A 361-amino-acid chain; its full sequence is Peptide chain release factor 1 (361 aa).

Gln-237 is modified (N5-methylglutamine).

It belongs to the prokaryotic/mitochondrial release factor family. Post-translationally, methylated by PrmC. Methylation increases the termination efficiency of RF1.

Its subcellular location is the cytoplasm. Its function is as follows. Peptide chain release factor 1 directs the termination of translation in response to the peptide chain termination codons UAG and UAA. The protein is Peptide chain release factor 1 of Alcanivorax borkumensis (strain ATCC 700651 / DSM 11573 / NCIMB 13689 / SK2).